The primary structure comprises 219 residues: Formate dehydrogenase 2 subunit beta (cytochrome c-553) (219 aa).

The region spanning 3 to 32 is the 4Fe-4S ferredoxin-type 1 domain; that stretch reads KAFLIDTTRCTACRGCQLACKEWHDLPANV. Residues C12, C15, C18, C22, C74, C77, C82, C124, C141, C144, C156, and C160 each contribute to the [4Fe-4S] cluster site. In terms of domain architecture, 4Fe-4S ferredoxin-type 2 spans 132–171; sequence DPKTKRITKCDMCFDRVSAGMQPICVKTCPTGTMAFGERD.

As to quaternary structure, heterotrimer of cytochrome c3 FDH2C and formate dehydrogenase FDH2 alpha and beta subunits that forms the FdhABC(3) complex. Requires [4Fe-4S] cluster as cofactor.

The protein resides in the periplasm. Beta chain of the formate dehydrogenase (FDH) that catalyzes the reversible two-electron oxidation of formate to carbon dioxide. The beta chain is an electron transfer unit. The polypeptide is Formate dehydrogenase 2 subunit beta (cytochrome c-553) (Nitratidesulfovibrio vulgaris (strain ATCC 29579 / DSM 644 / CCUG 34227 / NCIMB 8303 / VKM B-1760 / Hildenborough) (Desulfovibrio vulgaris)).